A 341-amino-acid polypeptide reads, in one-letter code: Cyanuric acid amidohydrolase (341 aa).

The segment at 1–90 is RU A; that stretch reads MAPIEILKFP…HVTFFLRSPG (90 aa). Residues Arg-51 and 71–72 each bind substrate; that span reads SG. The segment at 95–229 is RU B; it reads GLSAAVGHTR…CHILVLASTS (135 aa). The active site involves Lys-144. Substrate contacts are provided by residues Arg-176 and 212–213; that span reads SS. Ser-212 (nucleophile) is an active-site residue. The segment at 235–341 is RU C; the sequence is LHAVSRPMAD…SLCLVYETSI (107 aa). Glu-273 contacts Mg(2+). Residues Arg-300 and 319 to 320 each bind substrate; that span reads SG. Mg(2+) contacts are provided by Ala-322, Gln-325, Gly-326, Pro-327, and Gly-330.

It belongs to the cyclic amide hydrolase (CyAH) family. Homotetramer.

The catalysed reaction is cyanurate + H2O = 1-carboxybiuret + H(+). It functions in the pathway xenobiotic degradation; atrazine degradation; biuret from cyanurate: step 1/1. With respect to regulation, inhibited by barbituric acid. In terms of biological role, responsible for the hydrolysis of cyanuric acid, an intermediate formed during catabolism of s-triazine based compounds in herbicides such as atrazine and polymers such as melamine. Catalyzes the hydrolytic opening of the s-triazine ring of cyanuric acid (2,4,6-trihydroxy-s-triazine) to yield carbon dioxide and carboxybiuret, which spontaneously decarboxylates to biuret. Only active on cyanuric acid and N-methylisocyanuric acid. The sequence is that of Cyanuric acid amidohydrolase from Sarocladium sp.